The chain runs to 285 residues: 2-dehydro-3-deoxyphosphooctonate aldolase (285 aa).

The protein belongs to the KdsA family.

It is found in the cytoplasm. The catalysed reaction is D-arabinose 5-phosphate + phosphoenolpyruvate + H2O = 3-deoxy-alpha-D-manno-2-octulosonate-8-phosphate + phosphate. Its pathway is carbohydrate biosynthesis; 3-deoxy-D-manno-octulosonate biosynthesis; 3-deoxy-D-manno-octulosonate from D-ribulose 5-phosphate: step 2/3. The protein operates within bacterial outer membrane biogenesis; lipopolysaccharide biosynthesis. The chain is 2-dehydro-3-deoxyphosphooctonate aldolase from Delftia acidovorans (strain DSM 14801 / SPH-1).